The chain runs to 82 residues: UPF0235 protein Pden_2174 (82 aa).

Belongs to the UPF0235 family.

The sequence is that of UPF0235 protein Pden_2174 from Paracoccus denitrificans (strain Pd 1222).